The primary structure comprises 132 residues: ATP synthase epsilon chain (132 aa).

This sequence belongs to the ATPase epsilon chain family. In terms of assembly, F-type ATPases have 2 components, CF(1) - the catalytic core - and CF(0) - the membrane proton channel. CF(1) has five subunits: alpha(3), beta(3), gamma(1), delta(1), epsilon(1). CF(0) has three main subunits: a, b and c.

The protein resides in the cell membrane. Functionally, produces ATP from ADP in the presence of a proton gradient across the membrane. The protein is ATP synthase epsilon chain of Clostridium kluyveri (strain NBRC 12016).